The sequence spans 201 residues: Large ribosomal subunit protein uL4 (201 aa).

Residues threonine 43 to glycine 71 form a disordered region.

The protein belongs to the universal ribosomal protein uL4 family. As to quaternary structure, part of the 50S ribosomal subunit.

In terms of biological role, one of the primary rRNA binding proteins, this protein initially binds near the 5'-end of the 23S rRNA. It is important during the early stages of 50S assembly. It makes multiple contacts with different domains of the 23S rRNA in the assembled 50S subunit and ribosome. Forms part of the polypeptide exit tunnel. The polypeptide is Large ribosomal subunit protein uL4 (Psychromonas ingrahamii (strain DSM 17664 / CCUG 51855 / 37)).